Here is an 809-residue protein sequence, read N- to C-terminus: Protein PHOX3 (809 aa).

Residues 1–22 (MEKQNEEISTDDAETSQSQLVD) are disordered. TPR repeat units follow at residues 126–159 (AQGL…LPKD), 164–199 (SHVR…TPDH), 200–233 (NKAL…DPKN), 235–265 (MASE…PPDY), and 274–311 (AALW…EKKN). Residues 288 to 339 (TKKSNQVEEKSEGEGEDVEPEKKNNVLAEKGKEKIKMKVKGKQSDKRSDTSK) are disordered. Residue Ser298 is modified to Phosphoserine. Basic and acidic residues predominate over residues 307 to 339 (PEKKNNVLAEKGKEKIKMKVKGKQSDKRSDTSK). Residues 359–438 (NKDVKFVYSD…GTMRFYVVEV (80 aa)) form the PB1 domain. TPR repeat units follow at residues 508–541 (SEAM…SLLN), 563–597 (ESVS…KPEC), and 615–648 (SWYY…IKKS). The tract at residues 656-686 (ETGKESEPSQAGKTDCLTHEKDLGSSTQNNP) is disordered. The TPR 9 repeat unit spans residues 709–741 (SIMEYKLDQPFWRESLEAAMEKFELAGTCKDDV).

Carboxylate clamp type tetratricopeptide repeat protein that may act as a potential Hsp90/Hsp70 co-chaperone. Contributes to polar growth of root hairs. The chain is Protein PHOX3 from Arabidopsis thaliana (Mouse-ear cress).